The sequence spans 58 residues: Ribosome modulation factor (58 aa).

Belongs to the ribosome modulation factor family.

Its subcellular location is the cytoplasm. Its function is as follows. During stationary phase, converts 70S ribosomes to an inactive dimeric form (100S ribosomes). The polypeptide is Ribosome modulation factor (Tolumonas auensis (strain DSM 9187 / NBRC 110442 / TA 4)).